The sequence spans 107 residues: UPF0060 membrane protein Atu1058 (107 aa).

A run of 4 helical transmembrane segments spans residues 5-25 (LIYV…WAWL), 32-52 (WILL…TLVA), 59-79 (AYAA…WGVE), and 85-105 (RWDI…LFGP).

This sequence belongs to the UPF0060 family.

The protein localises to the cell inner membrane. This Agrobacterium fabrum (strain C58 / ATCC 33970) (Agrobacterium tumefaciens (strain C58)) protein is UPF0060 membrane protein Atu1058.